We begin with the raw amino-acid sequence, 465 residues long: Ribulose bisphosphate carboxylase large chain (465 aa).

Position 4 is an N6,N6,N6-trimethyllysine (lysine 4). Residues asparagine 113 and threonine 163 each contribute to the substrate site. The Proton acceptor role is filled by lysine 165. Lysine 167 is a binding site for substrate. Residues lysine 191, aspartate 193, and glutamate 194 each coordinate Mg(2+). At lysine 191 the chain carries N6-carboxylysine. The active-site Proton acceptor is the histidine 284. Residues arginine 285, histidine 317, and serine 369 each contribute to the substrate site.

The protein belongs to the RuBisCO large chain family. Type I subfamily. As to quaternary structure, heterohexadecamer of 8 large chains and 8 small chains; disulfide-linked. The disulfide link is formed within the large subunit homodimers. The cofactor is Mg(2+). The disulfide bond which can form in the large chain dimeric partners within the hexadecamer appears to be associated with oxidative stress and protein turnover.

The protein resides in the plastid. It localises to the chloroplast. The enzyme catalyses 2 (2R)-3-phosphoglycerate + 2 H(+) = D-ribulose 1,5-bisphosphate + CO2 + H2O. It catalyses the reaction D-ribulose 1,5-bisphosphate + O2 = 2-phosphoglycolate + (2R)-3-phosphoglycerate + 2 H(+). RuBisCO catalyzes two reactions: the carboxylation of D-ribulose 1,5-bisphosphate, the primary event in carbon dioxide fixation, as well as the oxidative fragmentation of the pentose substrate in the photorespiration process. Both reactions occur simultaneously and in competition at the same active site. The polypeptide is Ribulose bisphosphate carboxylase large chain (Fragaria ananassa (Strawberry)).